An 81-amino-acid chain; its full sequence is Cytotoxin I-like P-15 (81 aa).

A signal peptide spans 1 to 21 (MKTLLLTLAAATIVCLDLGYT). Disulfide bonds link cysteine 24-cysteine 42, cysteine 35-cysteine 59, cysteine 63-cysteine 74, and cysteine 75-cysteine 80.

This sequence belongs to the three-finger toxin family. Short-chain subfamily. Type IA cytotoxin sub-subfamily. In terms of assembly, monomer in solution; Homodimer and oligomer in the presence of negatively charged lipids forming a pore with a size ranging between 20 and 30 Angstroms. In terms of tissue distribution, expressed by the venom gland.

It localises to the secreted. Its subcellular location is the target cell membrane. In terms of biological role, shows cytolytic activity on many different cells by forming pore in lipid membranes. In vivo, increases heart rate or kills the animal by cardiac arrest. In addition, it binds to heparin with high affinity, interacts with Kv channel-interacting protein 1 (KCNIP1) in a calcium-independent manner, and binds to integrin alpha-V/beta-3 (ITGAV/ITGB3) with moderate affinity. In Naja atra (Chinese cobra), this protein is Cytotoxin I-like P-15.